We begin with the raw amino-acid sequence, 522 residues long: Cytochrome P450 monooxygenase FGSG_08207 (522 aa).

A helical membrane pass occupies residues 10–30 (LLLSKPVVLGLAACALLFLIG). Residues Asn-104 and Asn-155 are each glycosylated (N-linked (GlcNAc...) asparagine). A heme-binding site is contributed by Cys-441.

The protein belongs to the cytochrome P450 family. Heme is required as a cofactor.

The protein resides in the membrane. Its pathway is secondary metabolite biosynthesis. Functionally, cytochrome P450 monooxygenase; part of the gene cluster that mediates the biosynthesis of the lipopeptide fusaristatin A. Fusaristatin A consists of a polyketide chain linked to three amino acid residues glutamine (Gln), dehydroalanine (dehydro-Ala), and beta-aminoisobutyric acid. The biosynthesis starts with formation of a linear polyketide chain by the highly reducing polyketide synthase PKS6. The gene cluster does not contain an acyl-CoA ligase or an acyl-transferase, and it is therefore predicted that the polyketide is transferred directly to the nonribosomal peptide synthetase NRPS7. Modules 1-3 from NRPS7 incorporate dehydro-Ala, Gln, and beta-aminoisobutyric acid in the compound, which is released by cyclization. The beta-aminoisobutyric acid units are most likely not freely available to the NRPS, but can be synthesized from thymine, which requires a dehydrogenase, a monooxygenase, and an aminotransferase. The fusaristatin A cluster contains a cytochrome P450 monooxygenase (FGSG_08207) and an aminotransferase (FGSG_17085), which theoretically can perform two of the enzymatic steps. The enzymes may however also be involved in biosynthesis of dehydroalanine or modification of the polyketide. The dehydro-Ala residue can be a result of cyclization, where serine is dehydrated. The last gene of the cluster encodes a protein with an A/B barrel domain found in variable enzymes, which hampers functional prediction. The sequence is that of Cytochrome P450 monooxygenase FGSG_08207 from Gibberella zeae (strain ATCC MYA-4620 / CBS 123657 / FGSC 9075 / NRRL 31084 / PH-1) (Wheat head blight fungus).